The following is a 458-amino-acid chain: Argininosuccinate lyase (458 aa).

It belongs to the lyase 1 family. Argininosuccinate lyase subfamily.

The protein localises to the cytoplasm. The catalysed reaction is 2-(N(omega)-L-arginino)succinate = fumarate + L-arginine. It functions in the pathway amino-acid biosynthesis; L-arginine biosynthesis; L-arginine from L-ornithine and carbamoyl phosphate: step 3/3. The chain is Argininosuccinate lyase from Salmonella paratyphi B (strain ATCC BAA-1250 / SPB7).